The following is a 184-amino-acid chain: Photosystem I assembly protein Ycf4 (184 aa).

2 helical membrane passes run 22 to 42 (FCWA…GTSS) and 57 to 77 (ILFF…LFIS).

This sequence belongs to the Ycf4 family.

It is found in the plastid. The protein localises to the chloroplast thylakoid membrane. Seems to be required for the assembly of the photosystem I complex. The polypeptide is Photosystem I assembly protein Ycf4 (Panax ginseng (Korean ginseng)).